Reading from the N-terminus, the 435-residue chain is Putative F-box/kelch-repeat protein At1g13200 (435 aa).

The disordered stretch occupies residues 1 to 29 (MKDAEKREVIASSSLQRKRNRGRRLRKRR). Positions 16-29 (QRKRNRGRRLRKRR) are enriched in basic residues. Residues 37 to 82 (LMVPSSLPNDVLEEIFLRFPVKALIRLKSLSKQWRSTIESRSFEER) form the F-box domain. Kelch repeat units lie at residues 164 to 217 (SVYV…DYKL), 224 to 270 (DKYI…PASA), 273 to 317 (SVYW…HIDM), and 322 to 368 (NSLC…EKRD).

In Arabidopsis thaliana (Mouse-ear cress), this protein is Putative F-box/kelch-repeat protein At1g13200.